Here is a 425-residue protein sequence, read N- to C-terminus: 2-oxoglutarate and iron-dependent oxygenase JMJD4 homolog (425 aa).

The JmjC domain maps to 165–316; that stretch reads AAQMPGYNFY…MVWQNLKNNL (152 aa). 3 residues coordinate Fe cation: H212, D214, and H284.

This sequence belongs to the JMJD6 family. The cofactor is Fe(2+).

Its subcellular location is the nucleus. The protein localises to the cytoplasm. The catalysed reaction is L-lysyl-[protein] + 2-oxoglutarate + O2 = 4-hydroxy-L-lysyl-[protein] + succinate + CO2. Its function is as follows. Catalyzes the 2-oxoglutarate and iron-dependent C4-lysyl hydroxylation of eRF1 thereby promoting the translational termination efficiency of eRF1. May be involved in regulation of chromatin structure, promoting expansion of heterochromatin. This is 2-oxoglutarate and iron-dependent oxygenase JMJD4 homolog from Drosophila melanogaster (Fruit fly).